Here is a 333-residue protein sequence, read N- to C-terminus: Probable tRNA pseudouridine synthase B (333 aa).

Asp66 functions as the Nucleophile in the catalytic mechanism. A PUA domain is found at 233–308 (LKKIIVKDSA…EVVEITRVIM (76 aa)).

The protein belongs to the pseudouridine synthase TruB family. Type 2 subfamily.

The catalysed reaction is uridine(55) in tRNA = pseudouridine(55) in tRNA. Its function is as follows. Could be responsible for synthesis of pseudouridine from uracil-55 in the psi GC loop of transfer RNAs. The sequence is that of Probable tRNA pseudouridine synthase B from Methanococcus maripaludis (strain C7 / ATCC BAA-1331).